Here is a 603-residue protein sequence, read N- to C-terminus: Isocitrate dehydrogenase kinase/phosphatase (603 aa).

Residues 327–333 and lysine 348 contribute to the ATP site; that span reads APGIKGL. Residue aspartate 383 is part of the active site.

It belongs to the AceK family.

The protein resides in the cytoplasm. It catalyses the reaction L-seryl-[isocitrate dehydrogenase] + ATP = O-phospho-L-seryl-[isocitrate dehydrogenase] + ADP + H(+). Functionally, bifunctional enzyme which can phosphorylate or dephosphorylate isocitrate dehydrogenase (IDH) on a specific serine residue. This is a regulatory mechanism which enables bacteria to bypass the Krebs cycle via the glyoxylate shunt in response to the source of carbon. When bacteria are grown on glucose, IDH is fully active and unphosphorylated, but when grown on acetate or ethanol, the activity of IDH declines drastically concomitant with its phosphorylation. This is Isocitrate dehydrogenase kinase/phosphatase from Burkholderia thailandensis (strain ATCC 700388 / DSM 13276 / CCUG 48851 / CIP 106301 / E264).